The primary structure comprises 389 residues: Ankyrin repeat domain-containing protein 42 (389 aa).

Residues 1 to 21 (MPGVANSGPSTSSRETANPCS) are disordered. Residues 7-19 (SGPSTSSRETANP) are compositionally biased toward polar residues. 9 ANK repeats span residues 25–60 (VHFG…DITH), 64–93 (RGWT…NLTA), 97–126 (RGCT…DPSV), 130–159 (REWR…SIED), 163–192 (NGNL…SATQ), 200–232 (NGEN…DLED), 235–265 (TLAF…NINE), 269–298 (NGST…DSNI), and 302–332 (AGER…DIDD).

This chain is Ankyrin repeat domain-containing protein 42 (ANKRD42), found in Homo sapiens (Human).